The primary structure comprises 226 residues: Transcriptional regulatory protein CitT (226 aa).

The Response regulatory domain occupies 3-119 (HIAIAEDDFR…KFRQVLLQYK (117 aa)). Asp-54 bears the 4-aspartylphosphate mark. The segment at residues 178–197 (AEELGEKMGASRTTARRYAE) is a DNA-binding region (H-T-H motif).

In terms of processing, phosphorylated by CitS.

The protein resides in the cytoplasm. Member of the two-component regulatory system CitT/CitS. Regulates the expression of the citM-yflN operon. Phosphorylated CitT binds to the citM promoter to activate the transcription of the citM-yflN operon. This Bacillus subtilis (strain 168) protein is Transcriptional regulatory protein CitT (citT).